Reading from the N-terminus, the 478-residue chain is Phosphoglycerate kinase 2, chloroplastic (478 aa).

The transit peptide at 1-74 (MASTAATAAL…GKGARGVITM (74 aa)) directs the protein to the chloroplast. Phosphoserine is present on Ser78. (2R)-3-phosphoglycerate is bound by residues Ala96, Asp97, Asn99, Arg113, Thr135, His136, Gly138, Arg139, Arg194, His226, and Arg227. Gly272 contacts ADP. Gly272 serves as a coordination point for CDP. Residues Lys274 and Lys278 each contribute to the AMP site. Residue Lys278 participates in ATP binding. Gly296 is a binding site for ADP. Gly296 is a binding site for CDP. Positions 297 and 369 each coordinate AMP. ATP contacts are provided by Gly297 and Gly369. Residues Gly394 and Phe399 each contribute to the CDP site. Residue Phe399 participates in ADP binding. Glu400 lines the AMP pocket. ATP contacts are provided by Glu400, Asp431, and Ser432. Asp431 is a binding site for Mg(2+).

It belongs to the phosphoglycerate kinase family. In terms of assembly, monomer. Mg(2+) serves as cofactor.

It is found in the plastid. The protein localises to the chloroplast. It catalyses the reaction (2R)-3-phosphoglycerate + ATP = (2R)-3-phospho-glyceroyl phosphate + ADP. It functions in the pathway carbohydrate biosynthesis; Calvin cycle. This Arabidopsis thaliana (Mouse-ear cress) protein is Phosphoglycerate kinase 2, chloroplastic.